We begin with the raw amino-acid sequence, 442 residues long: Methylenetetrahydrofolate--tRNA-(uracil-5-)-methyltransferase TrmFO 1 (442 aa).

9 to 14 provides a ligand contact to FAD; sequence GAGLAG.

This sequence belongs to the MnmG family. TrmFO subfamily. FAD is required as a cofactor.

It localises to the cytoplasm. The enzyme catalyses uridine(54) in tRNA + (6R)-5,10-methylene-5,6,7,8-tetrahydrofolate + NADH + H(+) = 5-methyluridine(54) in tRNA + (6S)-5,6,7,8-tetrahydrofolate + NAD(+). It catalyses the reaction uridine(54) in tRNA + (6R)-5,10-methylene-5,6,7,8-tetrahydrofolate + NADPH + H(+) = 5-methyluridine(54) in tRNA + (6S)-5,6,7,8-tetrahydrofolate + NADP(+). Functionally, catalyzes the folate-dependent formation of 5-methyl-uridine at position 54 (M-5-U54) in all tRNAs. In Mesoplasma florum (strain ATCC 33453 / NBRC 100688 / NCTC 11704 / L1) (Acholeplasma florum), this protein is Methylenetetrahydrofolate--tRNA-(uracil-5-)-methyltransferase TrmFO 1.